The chain runs to 583 residues: Hyaluronan synthase-related protein (583 aa).

Over 1-29 (MENTTDPENIPVSKPKYPTIRRILSQTFR) the chain is Cytoplasmic. Residues 30 to 50 (ILLLFSITTAYVLGYQALCHQ) form a helical membrane-spanning segment. At 51–52 (GL) the chain is on the extracellular side. Residues 53–73 (LITFGLYGAAMLLHLLMQGIF) traverse the membrane as a helical segment. Topologically, residues 74 to 393 (ANLEIRRIEK…CNAQWWHQHH (320 aa)) are cytoplasmic. A helical membrane pass occupies residues 394–414 (IWMTYESATGIFFPFFVTAVL). Residues 415–425 (IRLMYSSSLCN) lie on the Extracellular side of the membrane. Residues 426-446 (IVWLFLCIQIMSLLLSLYASW) traverse the membrane as a helical segment. The Cytoplasmic portion of the chain corresponds to 447 to 457 (QSKKLSMVLMS). The helical transmembrane segment at 458-478 (LYSTLYIIWLLPCQLVALLTI) threads the bilayer. Residues 479-497 (AKSDWGTSGRKKVVNNYVP) lie on the Extracellular side of the membrane. Residues 498–518 (LFSLSIWAAVLLGGLCYSMYI) form a helical membrane-spanning segment. The Cytoplasmic segment spans residues 519–535 (GCRKDWSKPQANRELYH). Residues 536-556 (LLYGCAGYMAYWVLMTVIYCV) form a helical membrane-spanning segment. The Extracellular portion of the chain corresponds to 557 to 583 (SGSCCKMRSQAVPQTHDITSLSVSLLV).

Belongs to the NodC/HAS family.

The protein localises to the membrane. This Xenopus laevis (African clawed frog) protein is Hyaluronan synthase-related protein (has-rs).